The sequence spans 375 residues: Flagellar P-ring protein (375 aa).

The first 23 residues, 1-23 (MFNQSFLKYMLFGFFLFSFHAHA), serve as a signal peptide directing secretion.

This sequence belongs to the FlgI family. The basal body constitutes a major portion of the flagellar organelle and consists of four rings (L,P,S, and M) mounted on a central rod.

It localises to the bacterial flagellum basal body. Functionally, assembles around the rod to form the L-ring and probably protects the motor/basal body from shearing forces during rotation. The polypeptide is Flagellar P-ring protein (Buchnera aphidicola subsp. Baizongia pistaciae (strain Bp)).